Reading from the N-terminus, the 478-residue chain is NADH-quinone oxidoreductase subunit N (478 aa).

Transmembrane regions (helical) follow at residues 8–28, 38–58, 62–82, 106–126, 160–180, 200–220, 234–254, 268–288, 300–320, 322–342, 368–388, 398–418, and 445–465; these read LVLP…FGVW, ILWA…LGTG, AFGG…VILV, PILI…GDLM, FVLG…VYGF, IGLL…VSAV, PTPV…ALIA, WGQI…IAGI, SSIS…AAGV, SMLL…AFIL, AFAL…LGFF, IGAG…IGAF, and FAFL…MAGV.

The protein belongs to the complex I subunit 2 family. In terms of assembly, NDH-1 is composed of 14 different subunits. Subunits NuoA, H, J, K, L, M, N constitute the membrane sector of the complex.

Its subcellular location is the cellular chromatophore membrane. It carries out the reaction a quinone + NADH + 5 H(+)(in) = a quinol + NAD(+) + 4 H(+)(out). Its function is as follows. NDH-1 shuttles electrons from NADH, via FMN and iron-sulfur (Fe-S) centers, to quinones in the respiratory chain. The immediate electron acceptor for the enzyme in this species is believed to be ubiquinone. Couples the redox reaction to proton translocation (for every two electrons transferred, four hydrogen ions are translocated across the cytoplasmic membrane), and thus conserves the redox energy in a proton gradient. The protein is NADH-quinone oxidoreductase subunit N of Rhodobacter capsulatus (Rhodopseudomonas capsulata).